Here is a 547-residue protein sequence, read N- to C-terminus: Probable ABC transporter periplasmic-binding protein SapA (547 aa).

A signal peptide spans 1–21 (MRQVLSSLLVIAGLVSGQAIA).

It belongs to the bacterial solute-binding protein 5 family.

The protein resides in the periplasm. Its function is as follows. Not part of a putrescine export system. Very similar to a S.typhimurium protein implicated in antimicrobial peptide resistance, but the SapBCDF operon in E.coli is implicated in putrescine export. The polypeptide is Probable ABC transporter periplasmic-binding protein SapA (sapA) (Escherichia coli (strain K12)).